Here is a 100-residue protein sequence, read N- to C-terminus: Tachykinin-4 (100 aa).

A signal peptide spans 1 to 19; the sequence is MPSSVTLLLLMGLSVCTSA. 2 propeptides span residues 20 to 55 and 85 to 100; these read EDGGEEQTLGAEAGPWVTVTLEAGAVASIQLQLQEV and RASSTKGSVDEDQGAE. Positions 80 to 100 are disordered; sequence GLLGRRASSTKGSVDEDQGAE.

This sequence belongs to the tachykinin family.

Its subcellular location is the secreted. Functionally, tachykinins are active peptides which excite neurons, evoke behavioral responses, are potent vasodilators and secretagogues, and contract (directly or indirectly) many smooth muscles. The polypeptide is Tachykinin-4 (Oryctolagus cuniculus (Rabbit)).